A 224-amino-acid chain; its full sequence is MTQDQLKQAVAQAAVDFILPKLDEKSVVGVGTGSTANFFIDALAQHKTAFDGAVASSEATAQRLKGHGIPVYELNSVSELEFYVDGADESDAHLHLIKGGGAALTREKIVAAVAKTFICIADGSKLVPVLGAFPLPVEVIPMARSHVARQLVKLGGDPVYREGVVTDNGNVILDVYNLQITNPVELEAQINAIVGVVTNGLFAARPADLLLLGTAEGVKSLKAE.

Substrate contacts are provided by residues 32–35 (TGST), 85–88 (DGAD), and 98–101 (KGGG). Glu107 serves as the catalytic Proton acceptor. Residue Lys125 participates in substrate binding.

It belongs to the ribose 5-phosphate isomerase family. As to quaternary structure, homodimer.

The catalysed reaction is aldehydo-D-ribose 5-phosphate = D-ribulose 5-phosphate. The protein operates within carbohydrate degradation; pentose phosphate pathway; D-ribose 5-phosphate from D-ribulose 5-phosphate (non-oxidative stage): step 1/1. Its function is as follows. Catalyzes the reversible conversion of ribose-5-phosphate to ribulose 5-phosphate. This is Ribose-5-phosphate isomerase A from Pseudomonas putida (strain ATCC 700007 / DSM 6899 / JCM 31910 / BCRC 17059 / LMG 24140 / F1).